Consider the following 156-residue polypeptide: Small ribosomal subunit protein uS7 (156 aa).

Belongs to the universal ribosomal protein uS7 family. As to quaternary structure, part of the 30S ribosomal subunit. Contacts proteins S9 and S11.

Its function is as follows. One of the primary rRNA binding proteins, it binds directly to 16S rRNA where it nucleates assembly of the head domain of the 30S subunit. Is located at the subunit interface close to the decoding center, probably blocks exit of the E-site tRNA. The sequence is that of Small ribosomal subunit protein uS7 from Caldanaerobacter subterraneus subsp. tengcongensis (strain DSM 15242 / JCM 11007 / NBRC 100824 / MB4) (Thermoanaerobacter tengcongensis).